A 284-amino-acid polypeptide reads, in one-letter code: tRNA (guanine-N(7)-)-methyltransferase (284 aa).

Residues glycine 102, 125 to 126 (EI), 160 to 161 (NT), and cysteine 180 contribute to the S-adenosyl-L-methionine site. Aspartate 183 is an active-site residue. 258 to 260 (TEE) lines the S-adenosyl-L-methionine pocket.

Belongs to the class I-like SAM-binding methyltransferase superfamily. TrmB family. In terms of assembly, forms a complex with TRM82.

The protein resides in the nucleus. It catalyses the reaction guanosine(46) in tRNA + S-adenosyl-L-methionine = N(7)-methylguanosine(46) in tRNA + S-adenosyl-L-homocysteine. Its pathway is tRNA modification; N(7)-methylguanine-tRNA biosynthesis. Functionally, catalyzes the formation of N(7)-methylguanine at position 46 (m7G46) in tRNA. In Podospora anserina (strain S / ATCC MYA-4624 / DSM 980 / FGSC 10383) (Pleurage anserina), this protein is tRNA (guanine-N(7)-)-methyltransferase.